The following is a 707-amino-acid chain: Probable potassium transporter 17 (707 aa).

The disordered stretch occupies residues 1–25; the sequence is MDLEAGSIRPRSDGEGGGPAAGRET. The Cytoplasmic portion of the chain corresponds to 1 to 34; the sequence is MDLEAGSIRPRSDGEGGGPAAGRETDDSNVWKDL. Residues 35–55 form a helical membrane-spanning segment; that stretch reads FLAYKTLGVVFGGLVTSPLYV. Topologically, residues 56–71 are extracellular; that stretch reads YPSMNLSSPTEADYLG. A glycan (N-linked (GlcNAc...) asparagine) is linked at N60. A helical membrane pass occupies residues 72–92; that stretch reads IYSIMFWTLTLIGVVKYVCIA. Topologically, residues 93–157 are cytoplasmic; that stretch reads LNADDHGEGG…FFEQSITARR (65 aa). The helical transmembrane segment at 158-178 threads the bilayer; sequence VLLFVAVLGMCMLIGDGILTP. Residues 179–194 lie on the Extracellular side of the membrane; the sequence is AISVLSAIDGIRGPFP. Residues 195 to 215 traverse the membrane as a helical segment; it reads TVSKPVVEALSAAILIGLFLL. The Cytoplasmic portion of the chain corresponds to 216-222; sequence QKYGTSK. The helical transmembrane segment at 223–243 threads the bilayer; it reads VSFLFSPIMAAWTFTTPIIGL. The Extracellular segment spans residues 244–276; the sequence is YSIVHYYPGIFKAISPYYIVHFFLRNKRQGWQL. A helical transmembrane segment spans residues 277 to 297; it reads LGGTVLCITGAEAMFADLGHF. Over 298 to 305 the chain is Cytoplasmic; the sequence is SKKAIQIA. A helical transmembrane segment spans residues 306–326; the sequence is FLSSIYPSLVLTYAGQTAYLI. Residues 327-343 are Extracellular-facing; that stretch reads NNVNDFGDGFYKFVPRP. Residues 344-364 traverse the membrane as a helical segment; sequence VYWPMFVVATLAAIVASQSLI. Topologically, residues 365–402 are cytoplasmic; it reads SATFSVIKQSVVLDYFPRVKVVHTSQHKEGEVYSPEIN. A helical transmembrane segment spans residues 403-423; it reads YILMVLCVGVILGFGGGKAIG. Topologically, residues 424–427 are extracellular; it reads NAFG. The helical transmembrane segment at 428–448 threads the bilayer; sequence VVVIMVMLITTVLLTLVMIII. Topologically, residues 449–454 are cytoplasmic; that stretch reads WRTPLV. Residues 455–475 traverse the membrane as a helical segment; that stretch reads LAGLYFVPFFIMEGAYVSAVF. The Extracellular portion of the chain corresponds to 476–480; that stretch reads TKIPE. A helical transmembrane segment spans residues 481-501; the sequence is GGWLPFAVSITLAMIMFGWYY. Topologically, residues 502-707 are cytoplasmic; the sequence is GRQRKFEYEM…RVEIGMLYKV (206 aa).

It belongs to the HAK/KUP transporter (TC 2.A.72.3) family.

The protein localises to the membrane. High-affinity potassium transporter. The polypeptide is Probable potassium transporter 17 (HAK17) (Oryza sativa subsp. japonica (Rice)).